The following is an 83-amino-acid chain: Bublin coiled-coil protein (83 aa).

Residues Met-1 to Gly-24 are disordered. The stretch at Glu-25 to Leu-74 forms a coiled coil. The residue at position 82 (Ser-82) is a Phosphoserine.

The protein belongs to the UPF0184 (EST00098) family.

The protein localises to the cell junction. The protein resides in the cytoplasm. It localises to the cytoskeleton. Its function is as follows. Essential for intermediate filament organization in intestinal cells, interacts with intermediate filament and regulates intestinal lumen morphology. The chain is Bublin coiled-coil protein from Homo sapiens (Human).